The primary structure comprises 82 residues: UPF0213 protein SH2523 (82 aa).

A GIY-YIG domain is found at 2–77 (AKHYVYIVKC…KTFSRQQKLK (76 aa)).

It belongs to the UPF0213 family.

In Staphylococcus haemolyticus (strain JCSC1435), this protein is UPF0213 protein SH2523.